The primary structure comprises 62 residues: MKTLLPNVNTSEGCFEIGVTISNPVFTEDAINKRKQERELLNKICIVSMLARLRLMPKGCAQ.

Its function is as follows. Involved in cell division inhibition; this function can be repressed by DicA and DicC proteins as well as antitoxin CbeA (yeeU). This Escherichia coli (strain K12) protein is Division inhibition protein DicB (dicB).